A 270-amino-acid polypeptide reads, in one-letter code: Protein-ADP-ribose hydrolase (270 aa).

In terms of domain architecture, Macro spans 73–267; that stretch reads VSVKDCQKTN…LYDTYLQKEN (195 aa). 3 residues coordinate ADP-D-ribose: aspartate 92, isoleucine 93, and asparagine 106. Zn(2+)-binding residues include cysteine 112, histidine 117, and cysteine 119. Residues cysteine 119, isoleucine 120, aspartate 121, serine 212, threonine 213, glycine 214, glutamate 215, and phenylalanine 216 each coordinate ADP-D-ribose.

It belongs to the MacroD-type family. Zn-Macro subfamily. As to quaternary structure, monomer. Interacts with the lipoylated form of GcvH-L. Zn(2+) serves as cofactor.

It catalyses the reaction 4-O-(ADP-D-ribosyl)-L-aspartyl-[protein] + H2O = L-aspartyl-[protein] + ADP-D-ribose + H(+). The catalysed reaction is 5-O-(ADP-D-ribosyl)-L-glutamyl-[protein] + H2O = L-glutamyl-[protein] + ADP-D-ribose + H(+). It carries out the reaction S-(ADP-D-ribosyl)-L-cysteinyl-[protein] + H2O = ADP-D-ribose + L-cysteinyl-[protein]. Its function is as follows. ADP-ribosylhydrolase that specifically reverses the SirTM-mediated mono-ADP-ribosylation at an asparatate residue of GcvH-L (SpyM50867), by releasing ADP-ribose from the target protein. May play a role in the regulation of the response to host-induced oxidative stress. It can also hydrolyze ADP-ribosyl-glutamate bonds and ADP-ribosyl-cysteine bonds. In vitro, it can remove the ADP-ribosyl modification from the human mono-ADP-ribosylated PARP1 E988Q mutant, which is primarily modified on glutamate site with only minor aspartate contribution. It can also hydrolyze the ADP-ribosyl-cysteinyl glycosidic bond of a Cys-ADP-ribosylated synthetic peptide. The polypeptide is Protein-ADP-ribose hydrolase (Streptococcus pyogenes serotype M5 (strain Manfredo)).